A 300-amino-acid polypeptide reads, in one-letter code: Nucleotide-binding protein Daci_5422 (300 aa).

Position 10–17 (10–17 (GMSGSGKS)) interacts with ATP. 59 to 62 (DARS) is a GTP binding site.

This sequence belongs to the RapZ-like family.

Its function is as follows. Displays ATPase and GTPase activities. This chain is Nucleotide-binding protein Daci_5422, found in Delftia acidovorans (strain DSM 14801 / SPH-1).